We begin with the raw amino-acid sequence, 372 residues long: Cytochrome b (372 aa).

The next 4 membrane-spanning stretches (helical) occupy residues 25-45 (FGSMLLTCSALQTITGFFLAI), 69-90 (WIMQNLHAIGASMFFICIYIHI), 105-125 (WLSGTILLFILMATAFFGYVL), and 170-190 (FFALHFILPFTIISLSSIHIM). Positions 75 and 89 each coordinate heme b. Positions 174 and 188 each coordinate heme b. Histidine 193 contacts a ubiquinone. A run of 4 helical transmembrane segments spans residues 218-238 (HKDILVLTIMLTTMFIIMTLT), 280-300 (LGGTVALVLSVAILLTTPFTH), 312-332 (LTQLMFWTLVATFITITWAAT), and 339-358 (FTMIGQMTSLLYFSFFIMNP).

It belongs to the cytochrome b family. In terms of assembly, the cytochrome bc1 complex contains 3 respiratory subunits (MT-CYB, CYC1 and UQCRFS1), 2 core proteins (UQCRC1 and UQCRC2) and probably 6 low-molecular weight proteins. Heme b is required as a cofactor.

Its subcellular location is the mitochondrion inner membrane. Component of the ubiquinol-cytochrome c reductase complex (complex III or cytochrome b-c1 complex) that is part of the mitochondrial respiratory chain. The b-c1 complex mediates electron transfer from ubiquinol to cytochrome c. Contributes to the generation of a proton gradient across the mitochondrial membrane that is then used for ATP synthesis. This chain is Cytochrome b (MT-CYB), found in Lycodon semicarinatus (Ryukyu odd-tooth snake).